A 276-amino-acid polypeptide reads, in one-letter code: 4-deoxy-L-threo-5-hexosulose-uronate ketol-isomerase (276 aa).

Residues His194, His196, Glu201, and His243 each coordinate Zn(2+).

This sequence belongs to the KduI family. The cofactor is Zn(2+).

The catalysed reaction is 5-dehydro-4-deoxy-D-glucuronate = 3-deoxy-D-glycero-2,5-hexodiulosonate. It participates in glycan metabolism; pectin degradation; 2-dehydro-3-deoxy-D-gluconate from pectin: step 4/5. In terms of biological role, catalyzes the isomerization of 5-dehydro-4-deoxy-D-glucuronate to 3-deoxy-D-glycero-2,5-hexodiulosonate. This chain is 4-deoxy-L-threo-5-hexosulose-uronate ketol-isomerase, found in Shouchella clausii (strain KSM-K16) (Alkalihalobacillus clausii).